Consider the following 98-residue polypeptide: Integration host factor subunit alpha (98 aa).

The tract at residues 54–74 (LRDKSSRPGRNPKTGESVPVS) is disordered.

It belongs to the bacterial histone-like protein family. As to quaternary structure, heterodimer of an alpha and a beta chain.

This protein is one of the two subunits of integration host factor, a specific DNA-binding protein that functions in genetic recombination as well as in transcriptional and translational control. This is Integration host factor subunit alpha (ihfA) from Pasteurella multocida (strain Pm70).